A 162-amino-acid polypeptide reads, in one-letter code: AP-1 complex subunit sigma-2 (162 aa).

Belongs to the adaptor complexes small subunit family. As to quaternary structure, adaptor protein complex 1 (AP-1) is a heterotetramer composed of two large adaptins (gamma-type subunit and beta-type subunit), a medium adaptin (mu-type subunit) and a small adaptin (sigma-type subunit). Expressed in roots, stems, leaves, flowers and siliques (developing fruits and seeds).

The protein resides in the golgi apparatus. Its subcellular location is the cytoplasmic vesicle. The protein localises to the clathrin-coated vesicle membrane. Its function is as follows. Subunit of clathrin-associated adaptor protein complex 1 that plays a role in protein sorting at the trans-Golgi network and early endosomes (TGN/EE). The AP complexes mediate the recruitment of clathrin to membranes and the recognition of sorting signals within the cytosolic tails of transmembrane cargo molecules. In Arabidopsis thaliana (Mouse-ear cress), this protein is AP-1 complex subunit sigma-2 (AAP19-2).